A 302-amino-acid polypeptide reads, in one-letter code: Short-chain dehydrogenase/reductase 3 (302 aa).

4 consecutive transmembrane segments (helical) span residues 9–29 (LVVF…GLVL), 170–190 (IVCL…DYCT), 195–215 (AFAF…VSAT), and 253–273 (AVQL…LIIL). Substrate is bound at residue S175. The active-site Proton acceptor is Y188.

Belongs to the short-chain dehydrogenases/reductases (SDR) family. As to expression, in the retina, expressed in cone but not rod outer segments.

Its subcellular location is the membrane. The enzyme catalyses all-trans-retinol + NADP(+) = all-trans-retinal + NADPH + H(+). Catalyzes the reduction of all-trans-retinal to all-trans-retinol in the presence of NADPH. In Bos taurus (Bovine), this protein is Short-chain dehydrogenase/reductase 3 (DHRS3).